A 488-amino-acid chain; its full sequence is N-succinylglutamate 5-semialdehyde dehydrogenase (488 aa).

Position 221–226 (221–226 (GSSRTG)) interacts with NAD(+). Residues glutamate 244 and cysteine 278 contribute to the active site.

This sequence belongs to the aldehyde dehydrogenase family. AstD subfamily.

The catalysed reaction is N-succinyl-L-glutamate 5-semialdehyde + NAD(+) + H2O = N-succinyl-L-glutamate + NADH + 2 H(+). It functions in the pathway amino-acid degradation; L-arginine degradation via AST pathway; L-glutamate and succinate from L-arginine: step 4/5. Catalyzes the NAD-dependent reduction of succinylglutamate semialdehyde into succinylglutamate. This is N-succinylglutamate 5-semialdehyde dehydrogenase from Pseudomonas fluorescens (strain Pf0-1).